Here is a 318-residue protein sequence, read N- to C-terminus: Pantothenate kinase (318 aa).

An ATP-binding site is contributed by 96-103; it reads GSVSVGKS.

It belongs to the prokaryotic pantothenate kinase family.

The protein localises to the cytoplasm. It carries out the reaction (R)-pantothenate + ATP = (R)-4'-phosphopantothenate + ADP + H(+). The protein operates within cofactor biosynthesis; coenzyme A biosynthesis; CoA from (R)-pantothenate: step 1/5. The protein is Pantothenate kinase of Bradyrhizobium sp. (strain BTAi1 / ATCC BAA-1182).